The sequence spans 583 residues: Torsin-1A-interacting protein 1 (583 aa).

Positions 1–12 are enriched in basic and acidic residues; the sequence is MAGDGRRAEAVR. Disordered regions lie at residues 1-254 and 271-293; these read MAGD…RSSS and AHDK…WAPQ. The Nuclear segment spans residues 1–338; sequence MAGDGRRAEA…NASFVKRNRW (338 aa). Residue Ser60 is modified to Phosphoserine. Composition is skewed to basic and acidic residues over residues 74–101 and 115–124; these read VAKE…EVRE and RPQETEEMKT. Phosphoserine is present on residues Ser135 and Ser143. Position 146 is a methionine sulfoxide (Met146). 3 positions are modified to phosphoserine: Ser154, Ser156, and Ser157. The segment covering 165 to 174 has biased composition (polar residues); the sequence is QTDLSQTISK. Ser186 and Ser215 each carry phosphoserine. The segment covering 216 to 225 has biased composition (acidic residues); that stretch reads EEGETEEDDQ. At Thr220 the chain carries Phosphothreonine. Ser227, Ser230, and Ser242 each carry phosphoserine. Positions 238-250 are enriched in basic and acidic residues; sequence RSRDSDESGDKTT. Positions 277–287 are enriched in polar residues; it reads SVLSSGYQKTP. At Met301 the chain carries Methionine sulfoxide. Position 305 is a phosphoserine (Ser305). A Glycyl lysine isopeptide (Lys-Gly) (interchain with G-Cter in SUMO2) cross-link involves residue Lys308. A phosphoserine mark is found at Ser309 and Ser315. A disordered region spans residues 309 to 328; sequence SELGNQSPSTSSRQVTGQPQ. Residues 339 to 355 traverse the membrane as a helical segment; it reads WLLPLIAALASGSFWFF. Residues 356–583 lie on the Perinuclear space side of the membrane; sequence STPEVETTAV…ENALKRGICL (228 aa). Residues 356–583 are interaction with TOR1A; it reads STPEVETTAV…ENALKRGICL (228 aa). Residues 359–435 adopt a coiled-coil conformation; the sequence is EVETTAVQEF…SEQIADAYSS (77 aa). A glycan (N-linked (GlcNAc...) asparagine) is linked at Asn399. A Methionine sulfoxide modification is found at Met552.

It belongs to the TOR1AIP family. Interacts with ATP1B4. Interacts with TOR1A (ATP-bound). Interacts with TOR1B, TOR2A and TOR3A. Interacts with VIM. In terms of processing, phosphorylated. Dephosphorylated at Ser-309 and Ser-315 by serine/threonine-protein phosphatase PP1. In terms of tissue distribution, expressed in muscle, liver and kidney. Major isoform present in liver, brain and heart (at protein level). Expressed at lower levels than isoform 4 in lung, kidney and spleen (at protein level). Similar levels of isoforms 1 and 4 are observed in ovary, testis and pancreas (at protein level). As to expression, expressed at higher levels than isoform 1 in lung, kidney and spleen (at protein level). Expressed at lower levels than isoform 1 in liver, brain and heart (at protein level). Similar levels of isoforms 1 and 4 are observed in ovary, testis and pancreas (at protein level).

It is found in the nucleus inner membrane. The protein resides in the nucleus envelope. The protein localises to the nucleus. Required for nuclear membrane integrity. Induces TOR1A and TOR1B ATPase activity and is required for their location on the nuclear membrane. Binds to A- and B-type lamins. Possible role in membrane attachment and assembly of the nuclear lamina. The polypeptide is Torsin-1A-interacting protein 1 (TOR1AIP1) (Homo sapiens (Human)).